A 128-amino-acid polypeptide reads, in one-letter code: Fluoride-specific ion channel FluC (128 aa).

Transmembrane regions (helical) follow at residues 5–25 (IVAIFVGAGLGALLRWFLSIG), 35–55 (LGTLVSNLIGGYLIGIAVVAF), 67–87 (LFVITGFMGGLTTFSTYSVEV), and 96–116 (FGWALAVAALHLIGSFTLTGL). Residues Gly-75 and Thr-78 each coordinate Na(+).

This sequence belongs to the fluoride channel Fluc/FEX (TC 1.A.43) family.

It localises to the cell inner membrane. The enzyme catalyses fluoride(in) = fluoride(out). With respect to regulation, na(+) is not transported, but it plays an essential structural role and its presence is essential for fluoride channel function. Functionally, fluoride-specific ion channel. Important for reducing fluoride concentration in the cell, thus reducing its toxicity. This Burkholderia thailandensis (strain ATCC 700388 / DSM 13276 / CCUG 48851 / CIP 106301 / E264) protein is Fluoride-specific ion channel FluC.